Here is a 401-residue protein sequence, read N- to C-terminus: MKTLKDLGDLKGKRVLVRADFNVPLDGTTITDDGRIKAALPTIKALREQGAKVILMAHLGRPKGKVVPELSLAPVAARLGELLGITVPLAADTYGEDAQAKVAAMSDGDVVLLQNVRFNPEETSKDPEERAAYAKKIAALGEVFVSDGFGVVHRAQGSNYDVAADLPAAAGLLVEKEVKALSRATVNPERPLTVVLGGSKVSDKLGVIDNLLDKANRLVIGGGMAYTFLKAKGYEVGTSLLEEDQIETVKGYMERAEKNGVELVLPTDVVINPVFPKSDEDIAPEVVAADAIPADKMGLDIGPESQKLFHDKIVDSKTVVWNGPMGVFEVPTFAEGTKAVAQALVDATAAGAFTIVGGGDSASAVRNLGFPEDGFSHISTGGGASLEFLEGKELPGLKVLD.

Substrate contacts are provided by residues 20 to 22 (DFN), R35, 58 to 61 (HLGR), R117, and R154. ATP-binding positions include K204, G298, E329, and 358–361 (GGDS).

The protein belongs to the phosphoglycerate kinase family. In terms of assembly, monomer.

Its subcellular location is the cytoplasm. The enzyme catalyses (2R)-3-phosphoglycerate + ATP = (2R)-3-phospho-glyceroyl phosphate + ADP. It functions in the pathway carbohydrate degradation; glycolysis; pyruvate from D-glyceraldehyde 3-phosphate: step 2/5. The sequence is that of Phosphoglycerate kinase from Bifidobacterium adolescentis (strain ATCC 15703 / DSM 20083 / NCTC 11814 / E194a).